Here is a 323-residue protein sequence, read N- to C-terminus: Methionyl-tRNA formyltransferase (323 aa).

Ser117–Pro120 contacts (6S)-5,6,7,8-tetrahydrofolate.

The protein belongs to the Fmt family.

It catalyses the reaction L-methionyl-tRNA(fMet) + (6R)-10-formyltetrahydrofolate = N-formyl-L-methionyl-tRNA(fMet) + (6S)-5,6,7,8-tetrahydrofolate + H(+). Functionally, attaches a formyl group to the free amino group of methionyl-tRNA(fMet). The formyl group appears to play a dual role in the initiator identity of N-formylmethionyl-tRNA by promoting its recognition by IF2 and preventing the misappropriation of this tRNA by the elongation apparatus. The polypeptide is Methionyl-tRNA formyltransferase (Acidovorax ebreus (strain TPSY) (Diaphorobacter sp. (strain TPSY))).